The chain runs to 237 residues: MIQLPPHHLPAEPRWFAPGAPGPAALPEHVTATGVGSWWADRALDPRAVAVSCAGHVLLSGDPGSVAPGLLAPFAHSHVEAPVRFLPVLGSAFDRVVPDERMVYIHREPVEPPRPPRGVTVRRLTPTDAPALAALSADSSWIYDSWGGPEGLAASEHGWAAVDRDGRVAAVACGYFTGQAYEDVAVLTTPERRRERLALACVTALCADITARAHGELVLRTREPPEPPAGLDGGLPA.

Residues V119–A237 form the N-acetyltransferase domain.

This is an uncharacterized protein from Streptomyces virginiae (Streptomyces cinnamonensis).